We begin with the raw amino-acid sequence, 485 residues long: Acyltransferase cm3D (485 aa).

Residue His169 is the Proton acceptor of the active site.

Belongs to the plant acyltransferase family. In terms of assembly, monomer.

It functions in the pathway secondary metabolite biosynthesis. Its function is as follows. Acyltransferase; part of the gene cluster that mediates the biosynthesis of beauveriolides I and III, cyclodepsipeptides acting as inhibitors of the acyl-CoA:cholesterol acyltransferase. The HR-PKS cm3B initiates the biosynthesis of beauveriolides by iteratively catalyzing the formation of the linear polyketide chain. The ATP-dependent acetyl-CoA ligase cm3D converts the polyketide carboxylic acid to a CoA thioester which id shuttled to the first T domain in the NRPS cm3A by the acetyltransferase cm3C. Cm3A contains 13 domains and assembles the polyketide chain, L-phenylalanine, L-alanine, and D-leucine (or D-allo-isoleucine) to form beauveriolide I (or beauveriolide III). The production of both beauveriolides I and III suggests the substrate adaptability of cm3B, using different amino acids as substrates. The protein is Acyltransferase cm3D of Cordyceps militaris (strain CM01) (Caterpillar fungus).